Here is a 330-residue protein sequence, read N- to C-terminus: Phosphate acyltransferase (330 aa).

Belongs to the PlsX family. In terms of assembly, homodimer. Probably interacts with PlsY.

Its subcellular location is the cytoplasm. It catalyses the reaction a fatty acyl-[ACP] + phosphate = an acyl phosphate + holo-[ACP]. It functions in the pathway lipid metabolism; phospholipid metabolism. Functionally, catalyzes the reversible formation of acyl-phosphate (acyl-PO(4)) from acyl-[acyl-carrier-protein] (acyl-ACP). This enzyme utilizes acyl-ACP as fatty acyl donor, but not acyl-CoA. This chain is Phosphate acyltransferase, found in Bacillus thuringiensis (strain Al Hakam).